The following is a 116-amino-acid chain: uncharacterized protein (116 aa).

The protein belongs to the BolA/IbaG family.

It localises to the mitochondrion. This is an uncharacterized protein from Schizosaccharomyces pombe (strain 972 / ATCC 24843) (Fission yeast).